Reading from the N-terminus, the 208-residue chain is Translation initiation factor 2 subunit beta (208 aa).

Positions 145–203 (VIEEGETYELRIESVGSKGDGIAKVDKYLIFVPNTSKGEIVKAKVKKISGTLAFAEIVE) constitute a TRAM domain.

It belongs to the eIF-2-beta/eIF-5 family. In terms of assembly, heterotrimer composed of an alpha, a beta and a gamma chain.

Functionally, eIF-2 functions in the early steps of protein synthesis by forming a ternary complex with GTP and initiator tRNA. The sequence is that of Translation initiation factor 2 subunit beta from Methanothrix thermoacetophila (strain DSM 6194 / JCM 14653 / NBRC 101360 / PT) (Methanosaeta thermophila).